The sequence spans 530 residues: Ankyrin repeat domain-containing protein 53 (530 aa).

The segment covering 1–15 (MASAGSTARRAGSGS) has biased composition (low complexity). Positions 1 to 99 (MASAGSTARR…PSPSKESDQT (99 aa)) are disordered. A compositionally biased stretch (polar residues) spans 32–41 (PSGSMQQANK). 3 ANK repeats span residues 139-169 (KGFT…PVDL), 173-206 (NSQT…DLNA), and 210-239 (NGST…NVHA). Disordered regions lie at residues 323-360 (GHSL…VDAR) and 383-402 (PTMW…QISH). 2 stretches are compositionally biased toward polar residues: residues 326–341 (LVSN…LSKT) and 386–402 (WNVS…QISH).

Interacts with PSRC1; recruited by PSRC1 to the spindle during mitosis. In terms of processing, phosphorylated during mitosis.

Its subcellular location is the cytoplasm. It is found in the cytoskeleton. The protein resides in the spindle. The protein localises to the spindle pole. Required for normal progression through mitosis. Involved in chromosome alignment and cytokinesis via regulation of microtubules polymerization. This is Ankyrin repeat domain-containing protein 53 (ANKRD53) from Homo sapiens (Human).